A 642-amino-acid chain; its full sequence is Frizzled and smoothened-like protein B (642 aa).

The first 26 residues, 1-26 (MFNKNNNNNKIIIILKLFLIILIVNN), serve as a signal peptide directing secretion. Topologically, residues 27–264 (NNNIKTFGLN…KWHQMYNMSK (238 aa)) are extracellular. In terms of domain architecture, FZ spans 47 to 197 (DPTATCSNYI…GFFPVPCSDP (151 aa)). Cystine bridges form between Cys52–Cys123, Cys65–Cys116, and Cys143–Cys194. 7 N-linked (GlcNAc...) asparagine glycosylation sites follow: Asn80, Asn153, Asn162, Asn177, Asn203, Asn222, and Asn261. Residues 265–285 (ILSTISFVCSIYNVLTFGILN) traverse the membrane as a helical segment. Over 286–294 (HRRSKYNYC) the chain is Cytoplasmic. The chain crosses the membrane as a helical span at residues 295 to 315 (ITFFSASVIIITMMDIVTYGI). Topologically, residues 316–344 (GYEKLLCPEPGRFAVQSDVSCGATGALFH) are extracellular. The chain crosses the membrane as a helical span at residues 345-365 (IGITNGVFWWTTMSICLFAVV). Residues 366-375 (KRIKLFDFRY) are Cytoplasmic-facing. The chain crosses the membrane as a helical span at residues 376–398 (FIIFNTTASLISVIIPLAGNAFM). Over 399 to 416 (AGTGSLACWIRKTWYVNS) the chain is Extracellular. The helical transmembrane segment at 417–437 (VFWIPCGIALTIGSVCIILVI) threads the bilayer. The Cytoplasmic segment spans residues 438–460 (YEIYKITKNVSTKDNRMILLQIK). The helical transmembrane segment at 461-481 (PFLCVTLVGGSFYYLFIFNFD) threads the bilayer. The N-linked (GlcNAc...) asparagine glycan is linked to Asn482. At 482–514 (NESHSKEYKEKVVDYVMCLLSDTGKECLMAGPN) the chain is on the extracellular side. Residues 515–535 (YVAYFVFYFFIRLFGITFFCI) traverse the membrane as a helical segment. Topologically, residues 536 to 642 (YGTSQNARDI…INSASNTSSD (107 aa)) are cytoplasmic. The segment at 578–642 (GTNPTSNSKN…INSASNTSSD (65 aa)) is disordered. Residues 583–598 (SNSKNSKNNQNNQNNN) are compositionally biased toward low complexity. A coiled-coil region spans residues 584-611 (NSKNSKNNQNNQNNNSRKEFESKNIELE). Residues 599-609 (SRKEFESKNIE) are compositionally biased toward basic and acidic residues. Polar residues-rich tracts occupy residues 614-623 (ESISKGQTTR) and 632-642 (NINSASNTSSD).

It belongs to the G-protein coupled receptor Fz/Smo family.

The protein resides in the membrane. This Dictyostelium discoideum (Social amoeba) protein is Frizzled and smoothened-like protein B (fslB).